We begin with the raw amino-acid sequence, 447 residues long: Probable glycine dehydrogenase (decarboxylating) subunit 1 (447 aa).

This sequence belongs to the GcvP family. N-terminal subunit subfamily. The glycine cleavage system is composed of four proteins: P, T, L and H. In this organism, the P 'protein' is a heterodimer of two subunits.

It carries out the reaction N(6)-[(R)-lipoyl]-L-lysyl-[glycine-cleavage complex H protein] + glycine + H(+) = N(6)-[(R)-S(8)-aminomethyldihydrolipoyl]-L-lysyl-[glycine-cleavage complex H protein] + CO2. The glycine cleavage system catalyzes the degradation of glycine. The P protein binds the alpha-amino group of glycine through its pyridoxal phosphate cofactor; CO(2) is released and the remaining methylamine moiety is then transferred to the lipoamide cofactor of the H protein. The polypeptide is Probable glycine dehydrogenase (decarboxylating) subunit 1 (Maricaulis maris (strain MCS10) (Caulobacter maris)).